The following is a 402-amino-acid chain: Acetate kinase (402 aa).

Mg(2+) is bound at residue Asn-10. Position 17 (Lys-17) interacts with ATP. Arg-89 lines the substrate pocket. The Proton donor/acceptor role is filled by Asp-148. ATP is bound by residues 208–212 (HLGNG), 283–285 (DCR), and 334–338 (GIGEN). Mg(2+) is bound at residue Glu-389.

Belongs to the acetokinase family. As to quaternary structure, homodimer. Requires Mg(2+) as cofactor. Mn(2+) serves as cofactor.

The protein resides in the cytoplasm. The catalysed reaction is acetate + ATP = acetyl phosphate + ADP. It functions in the pathway metabolic intermediate biosynthesis; acetyl-CoA biosynthesis; acetyl-CoA from acetate: step 1/2. Its function is as follows. Catalyzes the formation of acetyl phosphate from acetate and ATP. Can also catalyze the reverse reaction. This chain is Acetate kinase, found in Actinobacillus pleuropneumoniae serotype 5b (strain L20).